The following is a 333-amino-acid chain: BRISC and BRCA1-A complex member 1 (333 aa).

An N-acetylmethionine modification is found at M1. Positions 1 to 85 (MEVAEANSPT…PWQVPASASE (85 aa)) are disordered. A Phosphoserine modification is found at S8. Residues 10–24 (TEEEEEEEEEGEETI) show a composition bias toward acidic residues. S33 and S53 each carry phosphoserine. The segment covering 58 to 67 (EAATADGGAA) has biased composition (low complexity). Positions 99–302 (VIICLDLSEE…LELHNCMAKL (204 aa)) are VWFA-like.

The protein belongs to the BABAM1 family. In terms of assembly, component of the ARISC complex, at least composed of UIMC1/RAP80, ABRAXAS1, BRCC3/BRCC36, BABAM2 and BABAM1/NBA1. Component of the BRCA1-A complex, at least composed of BRCA1, BARD1, UIMC1/RAP80, ABRAXAS1, BRCC3/BRCC36, BABAM2 and BABAM1/NBA1. In the BRCA1-A complex, interacts directly with ABRAXAS1 and BABAM2. Component of the BRISC complex, at least composed of ABRAXAS2, BRCC3/BRCC36, BABAM2 and BABAM1/NBA1. Identified in a complex with SHMT2 and the other subunits of the BRISC complex.

It is found in the cytoplasm. Its subcellular location is the nucleus. Component of the BRCA1-A complex, a complex that specifically recognizes 'Lys-63'-linked ubiquitinated histones H2A and H2AX at DNA lesions sites, leading to target the BRCA1-BARD1 heterodimer to sites of DNA damage at double-strand breaks (DSBs). The BRCA1-A complex also possesses deubiquitinase activity that specifically removes 'Lys-63'-linked ubiquitin on histones H2A and H2AX. In the BRCA1-A complex, it is required for the complex integrity and its localization at DSBs. Component of the BRISC complex, a multiprotein complex that specifically cleaves 'Lys-63'-linked ubiquitin in various substrates. In these 2 complexes, it is probably required to maintain the stability of BABAM2 and help the 'Lys-63'-linked deubiquitinase activity mediated by BRCC3/BRCC36 component. The BRISC complex is required for normal mitotic spindle assembly and microtubule attachment to kinetochores via its role in deubiquitinating NUMA1. Plays a role in interferon signaling via its role in the deubiquitination of the interferon receptor IFNAR1; deubiquitination increases IFNAR1 activity by enhancing its stability and cell surface expression. Down-regulates the response to bacterial lipopolysaccharide (LPS) via its role in IFNAR1 deubiquitination. In Mus musculus (Mouse), this protein is BRISC and BRCA1-A complex member 1 (Babam1).